Consider the following 399-residue polypeptide: Elongation factor Tu (399 aa).

A tr-type G domain is found at 10–204; the sequence is KPHVNIGTIG…AVDASIPEPE (195 aa). Residues 19 to 26 are G1; the sequence is GHVDHGKT. Residue 19 to 26 coordinates GTP; that stretch reads GHVDHGKT. A Mg(2+)-binding site is contributed by threonine 26. Residues 60–64 form a G2 region; the sequence is GITIN. Residues 81–84 are G3; sequence DCPG. GTP-binding positions include 81–85 and 136–139; these read DCPGH and NKCD. The G4 stretch occupies residues 136 to 139; the sequence is NKCD. A G5 region spans residues 174–176; it reads SGL.

It belongs to the TRAFAC class translation factor GTPase superfamily. Classic translation factor GTPase family. EF-Tu/EF-1A subfamily. In terms of assembly, monomer.

It is found in the cytoplasm. It carries out the reaction GTP + H2O = GDP + phosphate + H(+). GTP hydrolase that promotes the GTP-dependent binding of aminoacyl-tRNA to the A-site of ribosomes during protein biosynthesis. In Prochlorococcus marinus (strain MIT 9515), this protein is Elongation factor Tu.